We begin with the raw amino-acid sequence, 202 residues long: Imidazole glycerol phosphate synthase subunit HisH (202 aa).

One can recognise a Glutamine amidotransferase type-1 domain in the interval 3–202; the sequence is RIVIIDYGLG…KILRNFVEMC (200 aa). The active-site Nucleophile is C79. Catalysis depends on residues H183 and E185.

As to quaternary structure, heterodimer of HisH and HisF.

It is found in the cytoplasm. The catalysed reaction is 5-[(5-phospho-1-deoxy-D-ribulos-1-ylimino)methylamino]-1-(5-phospho-beta-D-ribosyl)imidazole-4-carboxamide + L-glutamine = D-erythro-1-(imidazol-4-yl)glycerol 3-phosphate + 5-amino-1-(5-phospho-beta-D-ribosyl)imidazole-4-carboxamide + L-glutamate + H(+). It catalyses the reaction L-glutamine + H2O = L-glutamate + NH4(+). It participates in amino-acid biosynthesis; L-histidine biosynthesis; L-histidine from 5-phospho-alpha-D-ribose 1-diphosphate: step 5/9. In terms of biological role, IGPS catalyzes the conversion of PRFAR and glutamine to IGP, AICAR and glutamate. The HisH subunit catalyzes the hydrolysis of glutamine to glutamate and ammonia as part of the synthesis of IGP and AICAR. The resulting ammonia molecule is channeled to the active site of HisF. The polypeptide is Imidazole glycerol phosphate synthase subunit HisH (Methanosarcina mazei (strain ATCC BAA-159 / DSM 3647 / Goe1 / Go1 / JCM 11833 / OCM 88) (Methanosarcina frisia)).